Consider the following 109-residue polypeptide: Large ribosomal subunit protein uL22 (109 aa).

It belongs to the universal ribosomal protein uL22 family. As to quaternary structure, part of the 50S ribosomal subunit.

Its function is as follows. This protein binds specifically to 23S rRNA; its binding is stimulated by other ribosomal proteins, e.g. L4, L17, and L20. It is important during the early stages of 50S assembly. It makes multiple contacts with different domains of the 23S rRNA in the assembled 50S subunit and ribosome. The globular domain of the protein is located near the polypeptide exit tunnel on the outside of the subunit, while an extended beta-hairpin is found that lines the wall of the exit tunnel in the center of the 70S ribosome. In Herminiimonas arsenicoxydans, this protein is Large ribosomal subunit protein uL22.